A 316-amino-acid chain; its full sequence is Protoheme IX farnesyltransferase (316 aa).

The next 9 helical transmembrane spans lie at 32 to 52, 53 to 73, 93 to 113, 116 to 136, 152 to 172, 180 to 200, 221 to 241, 252 to 271, and 289 to 309; these read VMSL…GHIH, PVLG…SGAL, IPAG…LSGF, VILG…TIFF, NIVI…ACVT, TVLF…LALF, VTKH…VLPS, LVAA…VWRM, and IFYL…PVLV.

It belongs to the UbiA prenyltransferase family. Protoheme IX farnesyltransferase subfamily.

The protein resides in the cell inner membrane. The enzyme catalyses heme b + (2E,6E)-farnesyl diphosphate + H2O = Fe(II)-heme o + diphosphate. The protein operates within porphyrin-containing compound metabolism; heme O biosynthesis; heme O from protoheme: step 1/1. Converts heme B (protoheme IX) to heme O by substitution of the vinyl group on carbon 2 of heme B porphyrin ring with a hydroxyethyl farnesyl side group. This chain is Protoheme IX farnesyltransferase, found in Rhizobium johnstonii (strain DSM 114642 / LMG 32736 / 3841) (Rhizobium leguminosarum bv. viciae).